The primary structure comprises 127 residues: Large ribosomal subunit protein uL24 (127 aa).

The protein belongs to the universal ribosomal protein uL24 family. Part of the 50S ribosomal subunit.

One of two assembly initiator proteins, it binds directly to the 5'-end of the 23S rRNA, where it nucleates assembly of the 50S subunit. Functionally, one of the proteins that surrounds the polypeptide exit tunnel on the outside of the subunit. The sequence is that of Large ribosomal subunit protein uL24 from Leptospira biflexa serovar Patoc (strain Patoc 1 / ATCC 23582 / Paris).